The chain runs to 205 residues: MFAVIKTGGKQYKVAEGDTIVIERLAAAAGETVTFDSVLMVGAGAGVTVGAPMVAGATVTGEVAAEVRGPKLITRKKRQRQTYRRTIGHRQDLMEVTITSINTDGKAPAKKAAAKKEEAPKADTAPKAAAAPTEEAAAGGDNLKKITGIGPALEKKLNAAGITTFAQIAALSADDIAKLEEELSLAGRFAKDGWVEQAAELAKEA.

The tract at residues 107–137 is disordered; that stretch reads APAKKAAAKKEEAPKADTAPKAAAAPTEEAA. Over residues 122 to 137 the composition is skewed to low complexity; it reads ADTAPKAAAAPTEEAA.

Belongs to the bacterial ribosomal protein bL21 family. In terms of assembly, part of the 50S ribosomal subunit. Contacts protein L20.

This protein binds to 23S rRNA in the presence of protein L20. The polypeptide is Large ribosomal subunit protein bL21 (Hyphomonas neptunium (strain ATCC 15444)).